Reading from the N-terminus, the 150-residue chain is Deoxyuridine 5'-triphosphate nucleotidohydrolase (150 aa).

Residues arginine 69–glycine 71, asparagine 82, leucine 86–aspartate 88, and methionine 96 contribute to the substrate site.

Belongs to the dUTPase family. Mg(2+) is required as a cofactor.

The catalysed reaction is dUTP + H2O = dUMP + diphosphate + H(+). It participates in pyrimidine metabolism; dUMP biosynthesis; dUMP from dCTP (dUTP route): step 2/2. Its function is as follows. This enzyme is involved in nucleotide metabolism: it produces dUMP, the immediate precursor of thymidine nucleotides and it decreases the intracellular concentration of dUTP so that uracil cannot be incorporated into DNA. This Acinetobacter baylyi (strain ATCC 33305 / BD413 / ADP1) protein is Deoxyuridine 5'-triphosphate nucleotidohydrolase.